The chain runs to 106 residues: Nucleoid-associated protein Nham_0463 (106 aa).

This sequence belongs to the YbaB/EbfC family. As to quaternary structure, homodimer.

It localises to the cytoplasm. Its subcellular location is the nucleoid. Its function is as follows. Binds to DNA and alters its conformation. May be involved in regulation of gene expression, nucleoid organization and DNA protection. The sequence is that of Nucleoid-associated protein Nham_0463 from Nitrobacter hamburgensis (strain DSM 10229 / NCIMB 13809 / X14).